Here is a 413-residue protein sequence, read N- to C-terminus: Histidine--tRNA ligase (413 aa).

Belongs to the class-II aminoacyl-tRNA synthetase family. Homodimer.

The protein localises to the cytoplasm. The enzyme catalyses tRNA(His) + L-histidine + ATP = L-histidyl-tRNA(His) + AMP + diphosphate + H(+). This chain is Histidine--tRNA ligase, found in Wolbachia sp. subsp. Brugia malayi (strain TRS).